Consider the following 584-residue polypeptide: (+)-larreatricin hydroxylase, chloroplastic (584 aa).

A chloroplast-targeting transit peptide spans 1-32 (MASLSSQSKLLATPYSFPYHTKPSRVSLRRVS). A thylakoid-targeting transit peptide spans 33 to 79 (CKASNDNKDKPNDQEKTFSIDRRNMLIGLGGLYGASNVFPSNQSTLA). 2 disulfides stabilise this stretch: C91/C106 and C105/C168. Residues H167, H188, H197, H319, H323, and H353 each coordinate Cu cation. The segment at residues 171–188 (CNGAYDQVGFPDVNIQVH) is a cross-link (2'-(S-cysteinyl)-histidine (Cys-His)). A propeptide spans 432–584 (RLRSKATTTT…KIEFVRDEED (153 aa)) (removed in mature form).

This sequence belongs to the tyrosinase family. Requires Cu(2+) as cofactor.

It localises to the plastid. It is found in the chloroplast thylakoid lumen. The catalysed reaction is (+)-larreatricin + AH2 + O2 = (+)-3'-hydroxylarreatricin + A + H2O. Functionally, enantio-specific polyphenol oxidase involved in aromatic ring hydroxylation. Involved in the biosynthesis of the creosote bush 8-8' linked lignans. Has a strong preference for the 3' position of (+)-larreatricin. This Larrea tridentata (Creosote bush) protein is (+)-larreatricin hydroxylase, chloroplastic.